The sequence spans 238 residues: Probable transcriptional regulatory protein SAK_1658 (238 aa).

Belongs to the TACO1 family. YeeN subfamily.

The protein localises to the cytoplasm. In Streptococcus agalactiae serotype Ia (strain ATCC 27591 / A909 / CDC SS700), this protein is Probable transcriptional regulatory protein SAK_1658.